Reading from the N-terminus, the 99-residue chain is Large ribosomal subunit protein eL30 (99 aa).

Belongs to the eukaryotic ribosomal protein eL30 family.

The protein is Large ribosomal subunit protein eL30 (rpl30e) of Pyrococcus horikoshii (strain ATCC 700860 / DSM 12428 / JCM 9974 / NBRC 100139 / OT-3).